The sequence spans 248 residues: Ribosomal RNA small subunit methyltransferase J (248 aa).

S-adenosyl-L-methionine contacts are provided by residues 98 to 99 (RD), 114 to 115 (ER), 150 to 151 (SS), and Asp168.

It belongs to the methyltransferase superfamily. RsmJ family.

The protein resides in the cytoplasm. The enzyme catalyses guanosine(1516) in 16S rRNA + S-adenosyl-L-methionine = N(2)-methylguanosine(1516) in 16S rRNA + S-adenosyl-L-homocysteine + H(+). Specifically methylates the guanosine in position 1516 of 16S rRNA. This Shewanella baltica (strain OS195) protein is Ribosomal RNA small subunit methyltransferase J.